The primary structure comprises 525 residues: GMP synthase [glutamine-hydrolyzing] (525 aa).

Residues 8-207 (KILILDFGSQ…VMDICGCDNK (200 aa)) form the Glutamine amidotransferase type-1 domain. Cysteine 85 serves as the catalytic Nucleophile. Residues histidine 181 and glutamate 183 contribute to the active site. Positions 208–400 (WQPASIIEDA…LGLPYDMLYR (193 aa)) constitute a GMPS ATP-PPase domain. ATP is bound at residue 235 to 241 (SGGVDSS).

Homodimer.

It catalyses the reaction XMP + L-glutamine + ATP + H2O = GMP + L-glutamate + AMP + diphosphate + 2 H(+). The protein operates within purine metabolism; GMP biosynthesis; GMP from XMP (L-Gln route): step 1/1. In terms of biological role, catalyzes the synthesis of GMP from XMP. The sequence is that of GMP synthase [glutamine-hydrolyzing] from Shewanella amazonensis (strain ATCC BAA-1098 / SB2B).